Here is a 664-residue protein sequence, read N- to C-terminus: L-glutamate oxidase precursor (664 aa).

The tat-type signal signal peptide spans 1–44 (MTEDHAVVRSDGGLSRRSFAAVAGTATVATALTSGVAAALPAPA). The FAD site is built by Ala105, Glu124, Ala125, Arg133, Met161, Arg162, Asp638, Trp646, and Ile647.

The protein belongs to the flavin monoamine oxidase family. LGOX subfamily. In terms of assembly, the mature enzyme is a heterohexamer composed of 2 alpha chains, 2 beta chains and 2 gamma chains (alpha2beta2gamma2). It depends on FAD as a cofactor. In terms of processing, predicted to be exported by the Tat system. The position of the signal peptide cleavage has not been experimentally proven. Post-translationally, the precursor form is proteolytically cleaved by an endopeptidase into alpha, beta and gamma chains, which form the stable mature enzyme.

The protein localises to the secreted. It carries out the reaction L-glutamate + O2 + H2O = H2O2 + 2-oxoglutarate + NH4(+). Activity is stimulated in the presence of Mn(2+), Ca(2+) or Mg(2+). In terms of biological role, catalyzes the oxidative deamination of L-glutamate to 2-ketoglutarate along with the production of ammonia and hydrogen peroxide. The sequence is that of L-glutamate oxidase precursor from Streptomyces viridosporus (strain ATCC 14672 / DSM 40746 / JCM 4963 / KCTC 9882 / NRRL B-12104 / FH 1290) (Streptomyces ghanaensis).